The sequence spans 310 residues: MKVSIYGAGRVGVSIAFSLLHTSLVDEMVLIDIDKKRAEGEALDLLHSSSMFKSCNIWAGDSKDIEDSDFIVITAGRSQRPGETRLELLGDNVRIMKEISEDIVKYSPNSIIINVTNPVDVLTYFIWQFTNLPSQRVIGTGTTLDTARLRVLLSQQCGISPASIHAYVIGEHGDSEFVPFSNATIGGLKLIDYCKLCENNSEQGFCLNLKIIEEKVRKAAYEIIERKGATNLAIGAVTARLISSMWRNEKRVWTISVLVDGIYIGYPSVIGKSGVEKVLRLNLSEDEEKKFQYSRSVIQKSIEEIKSKIF.

The NAD(+) site is built by V11, D32, and R37. Residues Q79, R85, and 117-120 (NPVD) contribute to the substrate site. Residues 115–117 (VTN) and T140 each bind NAD(+). Residue 145-148 (DTAR) coordinates substrate. The beta-D-fructose 1,6-bisphosphate site is built by R150 and H165. H172 serves as the catalytic Proton acceptor. Y221 is subject to Phosphotyrosine. Residue T230 participates in substrate binding.

This sequence belongs to the LDH/MDH superfamily. LDH family. As to quaternary structure, homotetramer.

The protein resides in the cytoplasm. It catalyses the reaction (S)-lactate + NAD(+) = pyruvate + NADH + H(+). The protein operates within fermentation; pyruvate fermentation to lactate; (S)-lactate from pyruvate: step 1/1. Allosterically activated by fructose 1,6-bisphosphate (FBP). Catalyzes the conversion of lactate to pyruvate. In Fervidobacterium nodosum (strain ATCC 35602 / DSM 5306 / Rt17-B1), this protein is L-lactate dehydrogenase.